A 2280-amino-acid polypeptide reads, in one-letter code: Metacaspase-3 (2280 aa).

Disordered regions lie at residues 56 to 83 (ILSK…DRED), 202 to 284 (YSTE…THRG), 791 to 819 (YKNS…MVNN), 931 to 954 (DDNS…RYDK), 994 to 1015 (SGKY…DDSE), 1278 to 1306 (KTNN…NPFI), and 1469 to 1500 (KAPT…NANA). Residues 63 to 83 (NKNENIKKRINEKDNDTDRED) show a composition bias toward basic and acidic residues. Composition is skewed to polar residues over residues 205 to 219 (EHTQ…TSKR) and 228 to 278 (DKAQ…NRKG). Composition is skewed to low complexity over residues 793-819 (NSMN…MVNN) and 931-941 (DDNSVQDSFFS). Composition is skewed to low complexity over residues 1278–1303 (KTNN…NNSN) and 1482–1500 (APTN…NANA).

The protein belongs to the peptidase C14B family.

Its function is as follows. Protease that cleaves specifically after arginine or lysine residues. The polypeptide is Metacaspase-3 (Plasmodium falciparum (isolate 3D7)).